We begin with the raw amino-acid sequence, 930 residues long: Wings apart-like protein 1 (930 aa).

The disordered stretch occupies residues Phe-540 to Ser-566. A compositionally biased stretch (low complexity) spans Ser-541–Ser-553. Over residues Gly-554 to Ser-566 the composition is skewed to polar residues. The WAPL domain maps to Lys-854–Leu-909.

This sequence belongs to the WAPL family. As to quaternary structure, interacts with the cohesin complex throughout the cell cycle. In terms of tissue distribution, expressed in roots, leaves, buds and siliques.

The protein localises to the nucleus. It localises to the chromosome. Functionally, regulator of sister chromatid cohesion in meiosis which negatively regulates cohesin association with chromatin, acting as an antagonist of CTF7. Cohesion ensures that chromosome partitioning is accurate in both meiotic and mitotic cells and plays an important role in DNA repair. Essential for the prophase removal of cohesin during meiosis thus determining the timely release of meiotic cohesion. Important for proper spindle attachment and assembly during meiosis. Helps to prevent abnormal centromere association during prophase I in meiocytes. Required for early embryonic patterning. Also involved in chromosome segregation during mitosis. The sequence is that of Wings apart-like protein 1 from Arabidopsis thaliana (Mouse-ear cress).